The sequence spans 650 residues: MGIVVPTMKASVIEVLLVLLVTGIHSNKETPKKTKRPKLTVPQINCDVKAGKIINPEFMVKCPAGCQDPKYHVYGTGVYASYSSVCGAAIHSGVLDNSGGKILVRKVAGQSGYKGSYSNGVQSLSLPRWRESFIVAESKPQKGVAYPSTLTYSSSKTAAAKAGETTKAYEKPSIPGTTIQPVTLTQAQATPVAEVTHRSTSKPFAASVTNSPRPQPVGHRSQEMEEVDGWKPGPVLLDSGFVPKEELSTQSSEPVPQGDPNCKIDLSFLIDGSTSIGKRRFRIQKQFLADVVQALDIGPAGPLVGVVQYGDNPATQFNLKTHMNSQDLKTAIEKITQRGGLSNVGRAISFVTKTFFSKANGNRGGAPNVAVVMVDGWPTDKVEEVSRVARESGINVFFITVEGAAERDIQHVVEPGFASKAVCRTNGFYSFNVQSWLSLHKTVQPLVKRVCDTDRLACSKTCLNSADIGFVIDGSSSMGTSNFRTVLQFVANLSKEFEISDTDTRVGAVQYTYEQRLEFGFDKYNSKADILSAIRRVGYWSGGTSTGAAIQYALEQLFKKSKPNKRKVMIIITDGRSYDDVRIPAMAAYQKGVITYAIGIAWAAQDELEVMATHPAKDHSFFVDDFDNLYKIAPRIIQNICTEFNSQPRN.

Positions 1–26 (MGIVVPTMKASVIEVLLVLLVTGIHS) are cleaved as a signal peptide. The 94-residue stretch at 40 to 133 (TVPQINCDVK…LSLPRWRESF (94 aa)) folds into the LCCL domain. 2 disulfide bridges follow: Cys46-Cys62 and Cys66-Cys86. The tract at residues 198 to 226 (RSTSKPFAASVTNSPRPQPVGHRSQEMEE) is disordered. VWFA domains are found at residues 265-450 (DLSF…VKRV) and 467-640 (DIGF…IQNI). Residue Asn492 is glycosylated (N-linked (GlcNAc...) asparagine).

In terms of assembly, binds dermatan sulfate and chondroitin sulfate.

It localises to the secreted. Its subcellular location is the extracellular space. The protein resides in the extracellular matrix. In terms of biological role, promotes matrix assembly and cell adhesiveness. Plays a role in spinal cord formation by regulating the proliferation and differentiation of neural stem cells. This chain is Vitrin (Vit), found in Mus musculus (Mouse).